The primary structure comprises 168 residues: MVEKKPNLTLEFHDYLALKKVLFDWADSYDAKDWDRLRSIIAPTLTVDYRQIGLRKWDDMPAEDYMAMISDMDFLGDPTVKTQHLLGESWWEKISDTEVIGHHQLRAAHQVYTDSTLQTVKLKGHGHATNEHYYRKVDGVWKFAGLKPTVRWNEYQFEDVFRAAKPSV.

Residues Y29 and Y49 each coordinate substrate. Active-site residues include H84 and H109. N130 is a substrate binding site.

It belongs to the scytalone dehydratase family. As to quaternary structure, homotrimer. Each subunit contains an active site, located in the central part of the hydrophobic core of the monomer, which functions independently.

Its subcellular location is the endosome. The catalysed reaction is scytalone = 1,3,8-trihydroxynaphthalene + H2O. The protein operates within pigment biosynthesis; melanin biosynthesis. With respect to regulation, fenoxanil inhibits arp1 scytalone dehydratase activity. Functionally, scytalone dehydratase; part of the gene cluster that mediates the biosynthesis of dihydroxynaphthalene (DHN)-melanin, a bluish-green pigment and a structural component of the conidial wall. The first step of the pathway is the production of the heptaketide naphtopyrone YWA1 by the polyketide synthase alb1 though condensation of acetyl-CoA with malonyl-CoA. The naphtopyrone YWA1 is then converted to the pentaketide 1,3,6,8-tetrahydroxynaphthalene (1,3,6,8-THN) by the heptaketide hydrolyase ayg1 though chain-length shortening. 1,3,6,8-THN is substrate of the hydroxynaphthalene reductase arp2 to yield scytalone. The scytalone dehydratase arp1 then reduces scytalone to 1,3,8-THN. 1,3,8-THN is also substrate of the hydroxynaphthalene reductase arp2 to yield vermelone. Vermelone is further converted by the multicopper oxidase abr1 to 1,8-DHN. Finally the laccase abr2 transforms 1,8-DHN to DHN-melanin. DHN-melanin biosynthesis appears to be initiated in endosomes where early enzymes (abl1, ayg1, arp1 and arp2) localize, with exocytosis leading to melanin deposition on the cell surface where late enzymes (abr1 and abr2) localize. DHN-melanin is an important structural component of the outer cell wall and is required for the presence of conidial surface hydrophobins. DHN-melanin also plays a crucial role in fungal virulence, including a protective role against the host's immune defenses. DHN-melanin also protects conidia against amoeba predation. The protein is Scytalone dehydratase arp1 of Aspergillus fumigatus (strain ATCC MYA-4609 / CBS 101355 / FGSC A1100 / Af293) (Neosartorya fumigata).